Here is a 735-residue protein sequence, read N- to C-terminus: MTPELMIKACSFYTGHLVKTHFCTWRDIARTNENVVLAEKMNRAVTCYNFRLQKSVFHHWHSYMEDQKEKLKNILLRIQQIIYCHKLTIILTKWRNTARHKSKKKEDELILKHELQLKKWKNRLILKRAAAEESNFPERSSSEVFLVDETLKCDISLLPERAILQIFFYLSLKDVIICGQVNHAWMLMTQLNSLWNAIDFSSVKNVIPDKYIVSTLQRWRLNVLRLNFRGCLLRPKTFRSVSHCRNLQELNVSDCPTFTDESMRHISEGCPGVLCLNLSNTTITNRTMRLLPRHFHNLQNLSLAYCRRFTDKGLQYLNLGNGCHKLIYLDLSGCTQISVQGFRYIANSCTGIMHLTINDMPTLTDNCVKALVEKCSRITSLVFTGAPHISDCTFRALSACKLRKIRFEGNKRVTDASFKFIDKNYPNLSHIYMADCKGITDSSLRSLSPLKQLTVLNLANCVRIGDMGLKQFLDGPASMRIRELNLSNCVRLSDASVMKLSERCPNLNYLSLRNCEHLTAQGIGYIVNIFSLVSIDLSGTDISNEGLNVLSRHKKLKELSVSECYRITDDGIQAFCKSSLILEHLDVSYCSQLSDMIIKALAIYCINLTSLSIAGCPKITDSAMEMLSAKCHYLHILDISGCVLLTDQILEDLQIGCKQLRILKMQYCTNISKKAAQRMSSKVQQQEYNTNDPPRWFGYDREGNPVTELDNITSSKGALELTVKKSTYSSEDQAA.

Positions 152–198 constitute an F-box domain; sequence KCDISLLPERAILQIFFYLSLKDVIICGQVNHAWMLMTQLNSLWNAI. LRR repeat units follow at residues 230-254, 255-280, 281-305, 306-333, 334-359, 360-385, 386-406, 410-435, 436-460, 461-488, 489-514, 515-538, 539-563, 564-589, 590-615, 616-641, and 642-667; these read GCLLRPKTFRSVSHCRNLQELNVSD, CPTFTDESMRHISEGCPGVLCLNLSN, TTITNRTMRLLPRHFHNLQNLSLAY, CRRFTDKGLQYLNLGNGCHKLIYLDLSG, CTQISVQGFRYIANSCTGIMHLTIND, MPTLTDNCVKALVEKCSRITSLVFTG, APHISDCTFRALSACKLRKIR, NKRVTDASFKFIDKNYPNLSHIYMAD, CKGITDSSLRSLSPLKQLTVLNLAN, CVRIGDMGLKQFLDGPASMRIRELNLSN, CVRLSDASVMKLSERCPNLNYLSLRN, CEHLTAQGIGYIVNIFSLVSIDLS, GTDISNEGLNVLSRHKKLKELSVSE, CYRITDDGIQAFCKSSLILEHLDVSY, CSQLSDMIIKALAIYCINLTSLSIAG, CPKITDSAMEMLSAKCHYLHILDISG, and CVLLTDQILEDLQIGCKQLRILKMQY. Residues 682–692 are compositionally biased toward polar residues; the sequence is KVQQQEYNTND. The interval 682 to 703 is disordered; the sequence is KVQQQEYNTNDPPRWFGYDREG.

The protein belongs to the DRC6 family. In terms of assembly, component of the nexin-dynein regulatory complex (N-DRC). Directly interacts with SKP1 and CUL1. Interacts with TCTE1/DRC5.

The protein localises to the cytoplasm. It is found in the cytoskeleton. It localises to the flagellum axoneme. The protein resides in the microtubule organizing center. Its subcellular location is the centrosome. Functionally, substrate-recognition component of the SCF (SKP1-CUL1-F-box protein)-type E3 ubiquitin ligase complex. Component of the nexin-dynein regulatory complex (N-DRC), a key regulator of ciliary/flagellar motility which maintains the alignment and integrity of the distal axoneme and regulates microtubule sliding in motile axonemes. Specifically targets CEP192 isoform 3 for ubiquitin-mediated proteolysis and thereby acts as a regulator of microtubule nucleation activity. The sequence is that of F-box and leucine-rich repeat protein 13 (FBXL13) from Homo sapiens (Human).